The following is a 613-amino-acid chain: Cilia- and flagella-associated protein 100 (613 aa).

Residues 36 to 55 (KSKESKKNKGNVTISDRSSN) form a disordered region. Residues 45–55 (GNVTISDRSSN) show a composition bias toward polar residues. Coiled-coil stretches lie at residues 167–198 (ALAMKRNEIQRLEMLATREENRLERAEKFLEK), 233–260 (VEIRELTAQITSIKSEISKFEDTLKHYK), 396–435 (FTKLEEENLSLIQNTQEMEETLDELNVTLKNTQIRMDKEV), and 504–580 (GTVQ…RGRK).

Belongs to the CFAP100 family.

It localises to the cytoplasm. Its subcellular location is the cytoskeleton. The protein localises to the cilium axoneme. May play a role in ciliary/flagellar motility by regulating the assembly and the activity of axonemal inner dynein arm. The sequence is that of Cilia- and flagella-associated protein 100 from Mus musculus (Mouse).